We begin with the raw amino-acid sequence, 114 residues long: Cytochrome c2 (114 aa).

Q1 carries the pyrrolidone carboxylic acid modification. C13, C16, H17, and M93 together coordinate heme c.

This sequence belongs to the cytochrome c family. Post-translationally, binds 1 heme c group covalently per subunit.

It is found in the periplasm. Cytochrome c2 is found mainly in purple, non-sulfur, photosynthetic bacteria where it functions as the electron donor to the oxidized bacteriochlorophyll in the photophosphorylation pathway. However, it may also have a role in the respiratory chain and is found in some non-photosynthetic bacteria. The protein is Cytochrome c2 of Rhodopseudomonas palustris.